The sequence spans 145 residues: MRQTFMANESNIERKWYVIDAEGKTLGRLSSEVAAILRGKNKVTYTPHVDTGDYVIVINASKIHFTGNKERDKMYYRHSNHPGGIKSISAGELKANNPERLLENSIKGMLPSTRLGEKQGKKLFVYGGAEHPHTAQQPENYELRG.

The protein belongs to the universal ribosomal protein uL13 family. In terms of assembly, part of the 50S ribosomal subunit.

Its function is as follows. This protein is one of the early assembly proteins of the 50S ribosomal subunit, although it is not seen to bind rRNA by itself. It is important during the early stages of 50S assembly. The chain is Large ribosomal subunit protein uL13 from Staphylococcus saprophyticus subsp. saprophyticus (strain ATCC 15305 / DSM 20229 / NCIMB 8711 / NCTC 7292 / S-41).